A 408-amino-acid chain; its full sequence is Aspartate aminotransferase (408 aa).

L-aspartate is bound by residues G45, W134, and N184. An N6-(pyridoxal phosphate)lysine modification is found at K247. R382 is a binding site for L-aspartate.

It belongs to the class-I pyridoxal-phosphate-dependent aminotransferase family. In terms of assembly, homodimer. Pyridoxal 5'-phosphate is required as a cofactor.

The protein resides in the cytoplasm. It catalyses the reaction L-aspartate + 2-oxoglutarate = oxaloacetate + L-glutamate. Catalyzes the reversible conversion of aspartate and 2-oxoglutarate to glutamate and oxaloacetate. Does not have prephenate aminotransferase activity. The protein is Aspartate aminotransferase of Streptomyces avermitilis (strain ATCC 31267 / DSM 46492 / JCM 5070 / NBRC 14893 / NCIMB 12804 / NRRL 8165 / MA-4680).